We begin with the raw amino-acid sequence, 42 residues long: Small, acid-soluble spore protein L (42 aa).

The tract at residues 1-42 (MKKKDKGRLTGGVTPQGDLEGNTHNDPKTELEERAKKSNTKR) is disordered. Positions 21–36 (GNTHNDPKTELEERAK) are enriched in basic and acidic residues.

The protein localises to the spore core. This chain is Small, acid-soluble spore protein L (sspL), found in Bacillus subtilis (strain 168).